The following is a 171-amino-acid chain: Disulfide bond formation protein B (171 aa).

Topologically, residues 1–8 (MQWSYRFV) are cytoplasmic. Residues 9–25 (SGLLVLASIVGMTFALY) form a helical membrane-spanning segment. Over 26-43 (LEHFKGLEPCPLCIFQRV) the chain is Periplasmic. A disulfide bond links Cys-35 and Cys-38. The helical transmembrane segment at 44–60 (GLMAMGIVALIAFLHNP) threads the bilayer. Topologically, residues 61 to 67 (VSNAFKR) are cytoplasmic. A helical membrane pass occupies residues 68 to 85 (VYAFLATLGILWSVGVAI). Residues 86 to 142 (RHVWLQTLPPDQVPSCGPGLNYLLDALPLKTVLQQVLQGSGECAAIHWTFLGQSLPV) are Periplasmic-facing. An intrachain disulfide couples Cys-101 to Cys-128. The helical transmembrane segment at 143 to 161 (WSLAYFSLILLVCVWQLLR) threads the bilayer. Residues 162–171 (RYPVIVTKKK) lie on the Cytoplasmic side of the membrane.

Belongs to the DsbB family.

It is found in the cell inner membrane. Functionally, required for disulfide bond formation in some periplasmic proteins. Acts by oxidizing the DsbA protein. The polypeptide is Disulfide bond formation protein B (Acinetobacter baylyi (strain ATCC 33305 / BD413 / ADP1)).